We begin with the raw amino-acid sequence, 251 residues long: Cell division protein ZapD (251 aa).

Belongs to the ZapD family. In terms of assembly, interacts with FtsZ.

Its subcellular location is the cytoplasm. Functionally, cell division factor that enhances FtsZ-ring assembly. Directly interacts with FtsZ and promotes bundling of FtsZ protofilaments, with a reduction in FtsZ GTPase activity. The polypeptide is Cell division protein ZapD (Burkholderia cenocepacia (strain ATCC BAA-245 / DSM 16553 / LMG 16656 / NCTC 13227 / J2315 / CF5610) (Burkholderia cepacia (strain J2315))).